The primary structure comprises 662 residues: Translation factor guf1, mitochondrial (662 aa).

Residues 1–42 (MRGCLQLARWLSAAPNWPASSLLKAPGSSFATRLFTTTSSYK) constitute a mitochondrion transit peptide. One can recognise a tr-type G domain in the interval 64-244 (ERYRNFCIVA…TVVEKIPAPI (181 aa)). GTP contacts are provided by residues 73–80 (AHVDHGKS), 137–141 (DTPGH), and 191–194 (NKVD).

Belongs to the TRAFAC class translation factor GTPase superfamily. Classic translation factor GTPase family. LepA subfamily.

It localises to the mitochondrion inner membrane. It catalyses the reaction GTP + H2O = GDP + phosphate + H(+). Promotes mitochondrial protein synthesis. May act as a fidelity factor of the translation reaction, by catalyzing a one-codon backward translocation of tRNAs on improperly translocated ribosomes. Binds to mitochondrial ribosomes in a GTP-dependent manner. In Emericella nidulans (strain FGSC A4 / ATCC 38163 / CBS 112.46 / NRRL 194 / M139) (Aspergillus nidulans), this protein is Translation factor guf1, mitochondrial (guf1).